The primary structure comprises 292 residues: Diaminopimelate epimerase (292 aa).

2 residues coordinate substrate: asparagine 14 and asparagine 81. Catalysis depends on cysteine 90, which acts as the Proton donor. Residues glycine 91–asparagine 92, asparagine 166, asparagine 202, and glutamate 220–arginine 221 contribute to the substrate site. Cysteine 229 acts as the Proton acceptor in catalysis. A substrate-binding site is contributed by glycine 230 to threonine 231.

It belongs to the diaminopimelate epimerase family. Homodimer.

The protein resides in the cytoplasm. It carries out the reaction (2S,6S)-2,6-diaminopimelate = meso-2,6-diaminopimelate. The protein operates within amino-acid biosynthesis; L-lysine biosynthesis via DAP pathway; DL-2,6-diaminopimelate from LL-2,6-diaminopimelate: step 1/1. In terms of biological role, catalyzes the stereoinversion of LL-2,6-diaminopimelate (L,L-DAP) to meso-diaminopimelate (meso-DAP), a precursor of L-lysine and an essential component of the bacterial peptidoglycan. This chain is Diaminopimelate epimerase, found in Rhodococcus erythropolis (strain PR4 / NBRC 100887).